The following is a 926-amino-acid chain: ABC transporter A family member 6 (926 aa).

6 helical membrane-spanning segments follow: residues 34–54, 336–356, 389–409, 418–438, 451–471, and 525–545; these read LIVI…VFDS, ASLI…PVIL, FLAI…AIGL, TIQF…AFLV, VAYI…QFLI, and DEVF…TYYI. One can recognise an ABC transporter domain in the interval 610–847; the sequence is IVCDNLKKVY…YGGSYVLTIT (238 aa). 648–655 is an ATP binding site; it reads GPNGAGKT.

The protein belongs to the ABC transporter superfamily. ABCA family. CPR flippase (TC 3.A.1.211) subfamily.

It is found in the membrane. In Arabidopsis thaliana (Mouse-ear cress), this protein is ABC transporter A family member 6 (ABCA6).